We begin with the raw amino-acid sequence, 430 residues long: Adenylosuccinate synthetase (430 aa).

GTP contacts are provided by residues 12–18 (GDEGKGK) and 40–42 (GHT). Aspartate 13 serves as the catalytic Proton acceptor. Positions 13 and 40 each coordinate Mg(2+). IMP contacts are provided by residues 13-16 (DEGK), 38-41 (NAGH), threonine 130, arginine 144, glutamine 224, threonine 239, and arginine 303. The Proton donor role is filled by histidine 41. 299 to 305 (TVTGRKR) provides a ligand contact to substrate. Residues arginine 305, 331-333 (KLD), and 413-415 (STS) contribute to the GTP site.

The protein belongs to the adenylosuccinate synthetase family. As to quaternary structure, homodimer. Mg(2+) is required as a cofactor.

The protein resides in the cytoplasm. The catalysed reaction is IMP + L-aspartate + GTP = N(6)-(1,2-dicarboxyethyl)-AMP + GDP + phosphate + 2 H(+). The protein operates within purine metabolism; AMP biosynthesis via de novo pathway; AMP from IMP: step 1/2. In terms of biological role, plays an important role in the de novo pathway of purine nucleotide biosynthesis. Catalyzes the first committed step in the biosynthesis of AMP from IMP. This chain is Adenylosuccinate synthetase, found in Cereibacter sphaeroides (strain KD131 / KCTC 12085) (Rhodobacter sphaeroides).